The chain runs to 575 residues: UvrABC system protein C (575 aa).

Residues 15 to 90 (AEPGVYQFEA…IKRHQPRYNV (76 aa)) enclose the GIY-YIG domain. The 36-residue stretch at 198 to 233 (GVLAEPLRREMETAAASQAFERAASLRDRLEAVETF) folds into the UVR domain.

Belongs to the UvrC family. As to quaternary structure, interacts with UvrB in an incision complex.

It is found in the cytoplasm. The UvrABC repair system catalyzes the recognition and processing of DNA lesions. UvrC both incises the 5' and 3' sides of the lesion. The N-terminal half is responsible for the 3' incision and the C-terminal half is responsible for the 5' incision. In Natronomonas pharaonis (strain ATCC 35678 / DSM 2160 / CIP 103997 / JCM 8858 / NBRC 14720 / NCIMB 2260 / Gabara) (Halobacterium pharaonis), this protein is UvrABC system protein C.